The following is a 630-amino-acid chain: Glutamyl-tRNA(Gln) amidotransferase subunit E (630 aa).

The protein belongs to the GatB/GatE family. GatE subfamily. As to quaternary structure, heterodimer of GatD and GatE.

It carries out the reaction L-glutamyl-tRNA(Gln) + L-glutamine + ATP + H2O = L-glutaminyl-tRNA(Gln) + L-glutamate + ADP + phosphate + H(+). Functionally, allows the formation of correctly charged Gln-tRNA(Gln) through the transamidation of misacylated Glu-tRNA(Gln) in organisms which lack glutaminyl-tRNA synthetase. The reaction takes place in the presence of glutamine and ATP through an activated gamma-phospho-Glu-tRNA(Gln). The GatDE system is specific for glutamate and does not act on aspartate. The sequence is that of Glutamyl-tRNA(Gln) amidotransferase subunit E from Methanocaldococcus jannaschii (strain ATCC 43067 / DSM 2661 / JAL-1 / JCM 10045 / NBRC 100440) (Methanococcus jannaschii).